Here is a 124-residue protein sequence, read N- to C-terminus: MLTIVAIALFGALGCLARYLLAGWVYAFVGRGFPYGTLTVNVVGAFLIGLIMEFSLRTTLIPQELRIGLTIGFLGGLTTFSTFSYETFRLLEDGEFITAAVNVLASVLVCLACTWLGIMTARHL.

4 helical membrane-spanning segments follow: residues I4–W24, G32–M52, I67–T87, and F96–L116. Positions 75 and 78 each coordinate Na(+).

This sequence belongs to the fluoride channel Fluc/FEX (TC 1.A.43) family.

Its subcellular location is the cell inner membrane. It carries out the reaction fluoride(in) = fluoride(out). Its activity is regulated as follows. Na(+) is not transported, but it plays an essential structural role and its presence is essential for fluoride channel function. Functionally, fluoride-specific ion channel. Important for reducing fluoride concentration in the cell, thus reducing its toxicity. This is Fluoride-specific ion channel FluC from Geobacter metallireducens (strain ATCC 53774 / DSM 7210 / GS-15).